Reading from the N-terminus, the 817-residue chain is Dual specificity tyrosine-phosphorylation-regulated kinase mbk-2 (817 aa).

Disordered regions lie at residues 1–46 (MAAL…HECP), 70–148 (PTSF…GPLG), 186–206 (GSYE…GSQQ), and 301–396 (LPNV…FRPE). Over residues 7–25 (FTRNSRSYGQQPIDVTQQG) the composition is skewed to polar residues. Composition is skewed to low complexity over residues 70 to 81 (PTSFSGASSSSS) and 97 to 111 (NLLG…SNSL). Composition is skewed to polar residues over residues 122-143 (SGNT…TNNL) and 193-206 (GQAQ…GSQQ). Residues 303-318 (NVGTSSSNGSSNSSSG) are compositionally biased toward low complexity. The span at 327–351 (LMTQSIGGPNKHLSASHSTLNTAST) shows a compositional bias: polar residues. A Phosphoserine; by cdk-1 modification is found at Ser-362. The span at 364–392 (SNESLSRSHTSSSGGSQGGHNSNSGSNSG) shows a compositional bias: low complexity. Residues 461-774 (YEVLKVIGKG…PAQALKHKWL (314 aa)) form the Protein kinase domain. ATP-binding positions include 467–475 (IGKGSFGQV) and Lys-490. The active-site Proton acceptor is the Asp-587. Tyr-621 bears the Phosphotyrosine; by autocatalysis mark.

The protein belongs to the protein kinase superfamily. CMGC Ser/Thr protein kinase family. MNB/DYRK subfamily. Part of a complex, consisting of pseudophosphatases egg-3, egg-4, egg-5 and kinase mbk-2; this complex is required for the oocyte-to-zygote transition. Interacts (via Tyr-619 and Tyr-621) with egg-4 (via tyrosine-protein phosphatase domain) and egg-5 (via tyrosine-protein phosphatase domain); mbk-2 tyrosine phosphorylation enhances the interaction. The interaction inhibits mbk-2 kinase activity and is required for mbk-2 oocyte cortex localization. Interacts (via N-terminus) with egg-3 (via tyrosine-protein phosphatase domain); the interaction does not affect mbk-2 kinase activity, is enhanced by mbk-2 tyrosine phosphorylation status and requires prior binding of mbk-2 to egg-4 and egg-5. Requires Mg(2+) as cofactor. In terms of processing, autophosphorylated. In terms of tissue distribution, in L1 larvae, expressed widely in the nervous system, including head neurons and the ventral nerve cord. In adult animals, continues to be expressed in the nervous system and is also expressed in body wall muscle.

Its subcellular location is the cytoplasm. The protein localises to the cell cortex. The enzyme catalyses L-seryl-[protein] + ATP = O-phospho-L-seryl-[protein] + ADP + H(+). It catalyses the reaction L-threonyl-[protein] + ATP = O-phospho-L-threonyl-[protein] + ADP + H(+). It carries out the reaction L-tyrosyl-[protein] + ATP = O-phospho-L-tyrosyl-[protein] + ADP + H(+). Activated during oocyte maturation by phosphorylation on Ser-362 by cdk-1. The pseudotyrosine phosphatases egg-4 and egg-5 sequester activated mbk-2 until the meiotic divisions and inhibit mbk-2 kinase activity directly, using a mixed-inhibition mechanism that does not involve tyrosine dephosphorylation. Functionally, required for oocyte-to-zygote transition in which it phosphorylates oocyte proteins, including mei-1, oma-1, oma-2, mex-5, and mex-6, modifying their activity and/or stability following meiosis. Through phosphorylation of P granule components including meg-1, promotes the disassembly of zygotic P granules in the anterior cytoplasm during zygote polarization, and thus plays a role in P granule distribution and segregation in early stage embryos following meiosis. Functions in both spindle positioning and in the posterior localization of cytoplasmic determinants, including pie-1, pos-1, and pgl-1, in early embryos. Involved in the asymmetric distribution of plk-1 at the 2-cell embryonic stage. This chain is Dual specificity tyrosine-phosphorylation-regulated kinase mbk-2, found in Caenorhabditis elegans.